We begin with the raw amino-acid sequence, 1732 residues long: Transient receptor potential cation channel subfamily M member 3 (1732 aa).

Residues 1–894 lie on the Cytoplasmic side of the membrane; that stretch reads MPGPWGTVYF…RKIYEFYNAP (894 aa). Calmodulin-binding regions lie at residues 41–64, 192–215, 300–323, 601–624, and 793–816; these read WTIR…QKSW, NFEL…MTTG, TGKY…QKIN, RKRF…KLLG, and RKNS…LEFK. The segment at 617 to 625 is required for the inhibitory action of G-beta/gamma-subunits of heterotrimeric G-proteins; it reads PKALKLLGM. Position 796 (S796) interacts with 1,2-dioctanoyl-sn-glycero-3-phospho-(1D-myo-inositol-4,5-bisphosphate). Residues 829-851 are disordered; that stretch reads EIHLQEKEPEEPEKPTKEKDEED. Residues 831–847 are compositionally biased toward basic and acidic residues; that stretch reads HLQEKEPEEPEKPTKEK. The helical transmembrane segment at 895-918 threads the bilayer; it reads IVKFWFYTLAYIGYLMLFNYIVLV. Over 919–925 the chain is Extracellular; that stretch reads KMERWPS. The chain crosses the membrane as a helical span at residues 926–948; that stretch reads TQEWIVISYIFTLGIEKMREILM. The Cytoplasmic portion of the chain corresponds to 949–964; that stretch reads SEPGKLLQKVKVWLQE. Residues 965–985 traverse the membrane as a helical segment; the sequence is YWNVTDLIAILLFSVGMILRL. Residues 986 to 989 lie on the Extracellular side of the membrane; it reads QDQP. A helical membrane pass occupies residues 990–1013; it reads FRSDGRVIYCVNIIYWYIRLLDIF. At 1014-1028 the chain is on the cytoplasmic side; it reads GVNKYLGPYVMMIGK. The 1,2-dioctanoyl-sn-glycero-3-phospho-(1D-myo-inositol-4,5-bisphosphate) site is built by K1017 and Y1018. Residues 1029 to 1056 form a helical membrane-spanning segment; sequence MMIDMMYFVIIMLVVLMSFGVARQAILF. Residues 1057–1073 are Extracellular-facing; sequence PNEEPSWKLAKNIFYMP. Positions 1074-1101 form an intramembrane region, pore-forming; that stretch reads YWMIYGEVFADQIDPPCGQNETREDGKT. At 1102 to 1111 the chain is on the extracellular side; the sequence is IQLPPCKTGA. A helical membrane pass occupies residues 1112–1137; the sequence is WIVPAIMACYLLVANILLVNLLIAVF. Residues 1138 to 1732 lie on the Cytoplasmic side of the membrane; that stretch reads NNTFFEVKSI…AFHSFESKHN (595 aa). Residues 1610–1732 are disordered; the sequence is EREAELSHPS…AFHSFESKHN (123 aa). 2 stretches are compositionally biased toward polar residues: residues 1635–1653 and 1690–1701; these read PISS…NNIT and NTASLRNPFQRS.

This sequence belongs to the transient receptor (TC 1.A.4) family. LTrpC subfamily. TRPM3 sub-subfamily. Homotetramer. Interacts with TRPM1; the interaction results in the formation of a heteromultimeric cation channel complex that are functionally different from the homomeric channels.

Its subcellular location is the cell membrane. The catalysed reaction is Ca(2+)(in) = Ca(2+)(out). It catalyses the reaction Mn(2+)(in) = Mn(2+)(out). The enzyme catalyses Zn(2+)(in) = Zn(2+)(out). It carries out the reaction Mg(2+)(in) = Mg(2+)(out). The catalysed reaction is Na(+)(in) = Na(+)(out). Its activity is regulated as follows. Activated by the neurosteroid pregnelonone sulfate (PregS). PregS activates the channel by shifting its current-voltage activation curve toward more negative membrane potentials and also potentiates temperature-induced activation. Activated by heat. Intracellular Ca(2+) inhibits TRPM3 probably via interaction with Ca(2+)/calmodulin. Intracellular Mg(2+) inhibits TRPM3 activity. Both intracellular and extracellular protons block TRPM3 through propable binding sites in the pore region. Positively regulated by phosphoinositide phosphoinositol 4,5-biphosphate (PI(4,5)P2). Strongly inhibited by activation of G(i)-coupled receptors via direct binding with G-beta/gamma-subunits of heterotrimeric G-proteins. With respect to regulation, insensitive to pregnenolone sulfate (PregS) or heat. Not inhibited by G-beta/gamma-subunits of heterotrimeric G-proteins. Functionally, constitutively active, non-selective divalent cation-conducting channel that is permeable to Ca(2+), Mn(2+), and Mg(2+), with a high permeability for Ca(2+). However, can be enhanced by increasing temperature and by ligands, including the endogenous neurosteroid pregnenolone sulfate and sphingosine-1 and suppressed by intracellular Mg(2+). Implicated in a variety of cellular processes, including insulin/peptide secretion, vascular constriction and dilation, noxious heat sensing, inflammatory and spontaneous pain sensitivity. In neurons of the dorsal root ganglia, functions as thermosensitive channel for the detection of noxious heat and spontaneous pain. Suggested to function as an ionotropic steroid receptor in beta-cell, indeed pregnenolone sulfate leads to Ca(2+) influx and enhanced insulin secretion. Mediates Zn(2+) uptake into the lumen of pancreatic beta cell secretory granules, thereby regulating insulin secretion. Forms heteromultimeric ion channels with TRPM1 which are permeable for Ca(2+) and Zn(2+) ions. Exists as multiple splice variants which differ significantly in their biophysical properties. Its function is as follows. Displays strongly reduced permeability for divalent cations and high selectivity toward monovalent cations. No channel activity. The protein is Transient receptor potential cation channel subfamily M member 3 of Mus musculus (Mouse).